The primary structure comprises 463 residues: Secretogranin-3 (463 aa).

A signal peptide spans 1–20; that stretch reads MGPKYVFITAIIGVFWHVQG. Disordered regions lie at residues 87 to 111, 225 to 267, and 353 to 398; these read VKRSGSVRSSVGGHRGTLDDADSTK, DDDK…PEED, and EDKN…KGKA. Composition is skewed to basic and acidic residues over residues 102–111 and 229–262; these read GTLDDADSTK and QEGKMETRNKNEDRESSETKNEDSFSSKERRNEL.

As to quaternary structure, interacts with CHGA. Interacts with secretogranin II/SCG2. Interacts (via C-terminus) with CPE.

The protein resides in the cytoplasmic vesicle. The protein localises to the secretory vesicle. It localises to the secretory vesicle membrane. Its subcellular location is the secreted. Functionally, member of the granin protein family that regulates the biogenesis of secretory granules. Acts as a sorting receptor for intragranular proteins including chromogranin A/CHGA. May also play a role in angiogenesis. Promotes endothelial proliferation, migration and tube formation through MEK/ERK signaling pathway. The polypeptide is Secretogranin-3 (scg3) (Xenopus tropicalis (Western clawed frog)).